The primary structure comprises 225 residues: NAD(P)H-quinone oxidoreductase subunit K, chloroplastic (225 aa).

The [4Fe-4S] cluster site is built by cysteine 43, cysteine 44, cysteine 108, and cysteine 139.

Belongs to the complex I 20 kDa subunit family. As to quaternary structure, NDH is composed of at least 16 different subunits, 5 of which are encoded in the nucleus. Requires [4Fe-4S] cluster as cofactor.

It is found in the plastid. It localises to the chloroplast thylakoid membrane. It catalyses the reaction a plastoquinone + NADH + (n+1) H(+)(in) = a plastoquinol + NAD(+) + n H(+)(out). It carries out the reaction a plastoquinone + NADPH + (n+1) H(+)(in) = a plastoquinol + NADP(+) + n H(+)(out). In terms of biological role, NDH shuttles electrons from NAD(P)H:plastoquinone, via FMN and iron-sulfur (Fe-S) centers, to quinones in the photosynthetic chain and possibly in a chloroplast respiratory chain. The immediate electron acceptor for the enzyme in this species is believed to be plastoquinone. Couples the redox reaction to proton translocation, and thus conserves the redox energy in a proton gradient. The polypeptide is NAD(P)H-quinone oxidoreductase subunit K, chloroplastic (Vitis vinifera (Grape)).